The sequence spans 370 residues: ATP synthase gamma chain, chloroplastic (370 aa).

The N-terminal 54 residues, 1 to 54 (MRSFCIAALLAVASAFTTQPTSFTVKTANVGERASGVFPEQSSAHRTRKATIVM), are a transit peptide targeting the chloroplast. Cys145 is an active-site residue.

Belongs to the ATPase gamma chain family. As to quaternary structure, F-type ATPases have 2 components, CF(1) - the catalytic core - and CF(0) - the membrane proton channel. CF(1) has five subunits: alpha(3), beta(3), gamma(1), delta(1), epsilon(1). CF(0) has four main subunits: a, b, b' and c.

The protein resides in the plastid. It is found in the chloroplast thylakoid membrane. Its function is as follows. Produces ATP from ADP in the presence of a proton gradient across the membrane. The gamma chain is believed to be important in regulating ATPase activity and the flow of protons through the CF(0) complex. In Phaeodactylum tricornutum (Diatom), this protein is ATP synthase gamma chain, chloroplastic (ATPC).